The following is a 158-amino-acid chain: Small ribosomal subunit protein uS7 (158 aa).

The protein belongs to the universal ribosomal protein uS7 family. Part of the 30S ribosomal subunit. Contacts proteins S9 and S11.

In terms of biological role, one of the primary rRNA binding proteins, it binds directly to 16S rRNA where it nucleates assembly of the head domain of the 30S subunit. Is located at the subunit interface close to the decoding center, probably blocks exit of the E-site tRNA. The chain is Small ribosomal subunit protein uS7 from Flavobacterium johnsoniae (strain ATCC 17061 / DSM 2064 / JCM 8514 / BCRC 14874 / CCUG 350202 / NBRC 14942 / NCIMB 11054 / UW101) (Cytophaga johnsonae).